Consider the following 217-residue polypeptide: Adenylate kinase (217 aa).

Gly10 to Thr15 is a binding site for ATP. Residues Ser30–Val59 are NMP. AMP contacts are provided by residues Thr31, Arg36, Gly57–Val59, Gly85–Arg88, and Gln92. The interval Gly122–Asp159 is LID. ATP contacts are provided by residues Arg123 and Thr132–Tyr133. The AMP site is built by Arg156 and Arg167. Gly203 is a binding site for ATP.

The protein belongs to the adenylate kinase family. As to quaternary structure, monomer.

It localises to the cytoplasm. The enzyme catalyses AMP + ATP = 2 ADP. It participates in purine metabolism; AMP biosynthesis via salvage pathway; AMP from ADP: step 1/1. Its function is as follows. Catalyzes the reversible transfer of the terminal phosphate group between ATP and AMP. Plays an important role in cellular energy homeostasis and in adenine nucleotide metabolism. This is Adenylate kinase from Azoarcus sp. (strain BH72).